Reading from the N-terminus, the 338-residue chain is Peptidoglycan deacetylase-like protein FGM2 (338 aa).

Zn(2+)-binding residues include D49, H124, and H128. The region spanning 65-257 (LSDYSAGIFA…VTNSHGFVSS (193 aa)) is the NodB homology domain.

The protein belongs to the polysaccharide deacetylase family.

Functionally, peptidoglycan deacetylase-like protein; part of the Fg3_54/C64 gene cluster that mediates the biosynthesis of the octapeptide fusaoctaxin A, a virulence factor that is required for cell-to-cell invasiveness of plant host. The 2 nonribosomal peptide synthetases NRPS9 and NRPS5 form an assembly line which likely utilizes GABA as a starter unit (loaded on the unique module M1 of NRPS9) and sequentially incorporates seven extender units composed of the residues L-Ala, L-allo-Ile, L-Ser, L-Val, L-Ser, L-Leu and L-Leu, respectively. During the process, each of the residues that are tethered on modules M3-M7 of NRPS5 containing an E domain can undergo an epimerization reaction to produce a D-configuration before the transpeptidation reaction occurs. The elongation of the peptidyl chain might be terminated by module M8-mediated L-Leu incorporation, followed by R domain-catalyzed 4 electron reduction to release the resulting octapeptide from the assembly line as an alcohol. Fusaoctaxin A is cleaved by the cluster specific ABC transporter FGM5 to the pentapeptide fusapentaxin A and the tripeptide fusatrixin A. The other enzymes from the cluster, FGM1, FGM2, FGM3 and FGM9 seem not to be involved in the biosynthesis of fusaoctaxin A and their functions have still to be determined. This is Peptidoglycan deacetylase-like protein FGM2 from Gibberella zeae (strain ATCC MYA-4620 / CBS 123657 / FGSC 9075 / NRRL 31084 / PH-1) (Wheat head blight fungus).